The following is a 128-amino-acid chain: Large ribosomal subunit protein uL22 (128 aa).

The protein belongs to the universal ribosomal protein uL22 family. In terms of assembly, part of the 50S ribosomal subunit.

Its function is as follows. This protein binds specifically to 23S rRNA; its binding is stimulated by other ribosomal proteins, e.g. L4, L17, and L20. It is important during the early stages of 50S assembly. It makes multiple contacts with different domains of the 23S rRNA in the assembled 50S subunit and ribosome. The globular domain of the protein is located near the polypeptide exit tunnel on the outside of the subunit, while an extended beta-hairpin is found that lines the wall of the exit tunnel in the center of the 70S ribosome. The polypeptide is Large ribosomal subunit protein uL22 (Prochlorococcus marinus subsp. pastoris (strain CCMP1986 / NIES-2087 / MED4)).